An 806-amino-acid chain; its full sequence is Volume-regulated anion channel subunit LRRC8E (806 aa).

At 1-22 the chain is on the cytoplasmic side; sequence MIPVAEFKQFTEQQPAFKVLKP. Residues 23–43 traverse the membrane as a helical segment; sequence WWDVLAEYITYAMLMIGVFGC. Residues 44-130 lie on the Extracellular side of the membrane; sequence TLQVTQDKII…YETALHWYAK (87 aa). A disulfide bridge connects residues Cys54 and Cys311. N-linked (GlcNAc...) asparagine glycosylation is found at Asn57 and Asn80. Residues 75–104 are disordered; the sequence is QSSASNDSDLETTVPPPTATSSPPREMSGL. A helical transmembrane segment spans residues 131–151; that stretch reads YFPYLVVIHTLIFIICGNFWF. The Cytoplasmic segment spans residues 152 to 275; it reads KFPGTSSKIE…MRQTVLKVCK (124 aa). Residues 182–217 are disordered; the sequence is EVSGESSQEKPNQERSIDRELSKPNFEEGSPATADL. Over residues 188-207 the composition is skewed to basic and acidic residues; it reads SQEKPNQERSIDRELSKPNF. Residues 276 to 296 traverse the membrane as a helical segment; it reads FVLITIYNAVLVGKIHFIVPC. Topologically, residues 297–323 are extracellular; the sequence is SVHTEDMTGYNSFCCNHTKAHLFSKLA. N-linked (GlcNAc...) asparagine glycosylation occurs at Asn312. A helical membrane pass occupies residues 324 to 344; it reads ISYLCFLGVYGLTCFYTLYWL. Residues 345–806 are Cytoplasmic-facing; it reads FRRPLKEYSF…VDVRDKFKED (462 aa). LRR repeat units follow at residues 569 to 589, 593 to 614, 616 to 637, 641 to 662, 664 to 685, 687 to 708, 710 to 731, 733 to 754, and 756 to 777; these read HLQK…NALK, LVKE…VFSL, NLQV…ISLQ, KLSV…IRKL, GLEE…LFLC, KLRH…IGVL, LLQY…LFFC, KLKT…VGSL, and CLVK…IGNC.

The protein belongs to the LRRC8 family. Heterohexamer; oligomerizes with other LRRC8 proteins (lrrc8a, lrrc8c, lrrc8d and/or lrrc8b) to form a heterohexamer. Detected in a channel complex that contains lrrc8a, lrrc8c and lrrc8e. In vivo, the subunit composition may depend primarily on expression levels, and heterooligomeric channels containing various proportions of the different LRRC8 proteins may coexist.

The protein localises to the cell membrane. It localises to the endoplasmic reticulum membrane. Its subcellular location is the lysosome membrane. The catalysed reaction is chloride(in) = chloride(out). It carries out the reaction iodide(out) = iodide(in). The enzyme catalyses taurine(out) = taurine(in). It catalyses the reaction 2',3'-cGAMP(out) = 2',3'-cGAMP(in). Functionally, non-essential component of the volume-regulated anion channel (VRAC, also named VSOAC channel), an anion channel required to maintain a constant cell volume in response to extracellular or intracellular osmotic changes. The VRAC channel conducts iodide better than chloride and can also conduct organic osmolytes like taurine. Mediates efflux of amino acids, such as aspartate, in response to osmotic stress. The VRAC channel also mediates transport of immunoreactive cyclic dinucleotide GMP-AMP (2'-3'-cGAMP), an immune messenger produced in response to DNA virus in the cytosol. Channel activity requires lrrc8a plus at least one other family member (lrrc8b, lrrc8c, lrrc8d or lrrc8e); channel characteristics depend on the precise subunit composition. Also plays a role in lysosome homeostasis by forming functional lysosomal VRAC channels in response to low cytoplasmic ionic strength condition: lysosomal VRAC channels are necessary for the formation of large lysosome-derived vacuoles, which store and then expel excess water to maintain cytosolic water homeostasis. The sequence is that of Volume-regulated anion channel subunit LRRC8E from Xenopus laevis (African clawed frog).